A 195-amino-acid polypeptide reads, in one-letter code: Adenylate kinase (195 aa).

8 to 16 (GIPGVGKTT) provides a ligand contact to ATP.

It belongs to the archaeal adenylate kinase family.

It is found in the cytoplasm. The enzyme catalyses AMP + ATP = 2 ADP. This chain is Adenylate kinase, found in Saccharolobus islandicus (strain M.14.25 / Kamchatka #1) (Sulfolobus islandicus).